The sequence spans 244 residues: Ubiquinone biosynthesis O-methyltransferase (244 aa).

S-adenosyl-L-methionine is bound by residues Arg36, Gly60, Asp81, and Leu123.

This sequence belongs to the methyltransferase superfamily. UbiG/COQ3 family.

The catalysed reaction is a 3-demethylubiquinol + S-adenosyl-L-methionine = a ubiquinol + S-adenosyl-L-homocysteine + H(+). The enzyme catalyses a 3-(all-trans-polyprenyl)benzene-1,2-diol + S-adenosyl-L-methionine = a 2-methoxy-6-(all-trans-polyprenyl)phenol + S-adenosyl-L-homocysteine + H(+). Its pathway is cofactor biosynthesis; ubiquinone biosynthesis. In terms of biological role, O-methyltransferase that catalyzes the 2 O-methylation steps in the ubiquinone biosynthetic pathway. This Rickettsia felis (strain ATCC VR-1525 / URRWXCal2) (Rickettsia azadi) protein is Ubiquinone biosynthesis O-methyltransferase.